A 330-amino-acid chain; its full sequence is Glycerol-3-phosphate dehydrogenase [NAD(P)+] (330 aa).

NADPH-binding residues include Trp11, Arg33, and Lys105. Residues Lys105, Gly133, and Ser135 each contribute to the sn-glycerol 3-phosphate site. Position 137 (Ala137) interacts with NADPH. Lys188, Asp241, Ser251, Arg252, and Asn253 together coordinate sn-glycerol 3-phosphate. Lys188 serves as the catalytic Proton acceptor. Arg252 contacts NADPH. Val276 and Glu278 together coordinate NADPH.

Belongs to the NAD-dependent glycerol-3-phosphate dehydrogenase family.

It localises to the cytoplasm. The catalysed reaction is sn-glycerol 3-phosphate + NAD(+) = dihydroxyacetone phosphate + NADH + H(+). It catalyses the reaction sn-glycerol 3-phosphate + NADP(+) = dihydroxyacetone phosphate + NADPH + H(+). It functions in the pathway membrane lipid metabolism; glycerophospholipid metabolism. Catalyzes the reduction of the glycolytic intermediate dihydroxyacetone phosphate (DHAP) to sn-glycerol 3-phosphate (G3P), the key precursor for phospholipid synthesis. This chain is Glycerol-3-phosphate dehydrogenase [NAD(P)+], found in Acidovorax ebreus (strain TPSY) (Diaphorobacter sp. (strain TPSY)).